An 87-amino-acid chain; its full sequence is Beta-toxin CsE3 (87 aa).

An N-terminal signal peptide occupies residues 1–19; it reads MNSLLIIAACLALIGTVWA. One can recognise an LCN-type CS-alpha/beta domain in the interval 20–85; sequence KEGYIVNYHT…VWPLPKKKCN (66 aa). 4 disulfides stabilise this stretch: C31–C84, C35–C60, C44–C65, and C48–C67. N85 is subject to Asparagine amide.

It belongs to the long (4 C-C) scorpion toxin superfamily. Sodium channel inhibitor family. Beta subfamily. Expressed by the venom gland.

The protein localises to the secreted. Beta toxins bind voltage-independently at site-4 of sodium channels (Nav) and shift the voltage of activation toward more negative potentials thereby affecting sodium channel activation and promoting spontaneous and repetitive firing. This is Beta-toxin CsE3 from Centruroides sculpturatus (Arizona bark scorpion).